We begin with the raw amino-acid sequence, 809 residues long: Leucine--tRNA ligase (809 aa).

The 'HIGH' region signature appears at 40–50 (PYPSGRIHMGH). Positions 579–583 (KMSKS) match the 'KMSKS' region motif. Lys-582 provides a ligand contact to ATP.

It belongs to the class-I aminoacyl-tRNA synthetase family.

The protein localises to the cytoplasm. It carries out the reaction tRNA(Leu) + L-leucine + ATP = L-leucyl-tRNA(Leu) + AMP + diphosphate. This Campylobacter lari (strain RM2100 / D67 / ATCC BAA-1060) protein is Leucine--tRNA ligase.